The chain runs to 515 residues: Protein pid-4 (515 aa).

Residues 496–515 (DRSPQKFKFPASGSYMKPAN) are disordered.

May interact with pid-2, app-1 and prmt-5.

It is found in the cytoplasm. It localises to the perinuclear region. Its subcellular location is the P-body. Functionally, together with pid-5, it is involved in gene silencing mediated by a class of 21 nucleotide PIWI-interacting RNAs (piRNAs) that possess a uracil residue at the 5'-end (also called 21U-RNAs) and guide the Piwi protein prg-1 to its DNA targets for silencing. Together with pid-5, it is required for the biogenesis of secondary and tertiary 22G-siRNAs. Specifically, promotes the production of 22G-siRNAs from the 5' end of target mRNAs. Together with pid-5, plays a role in small RNA-directed transgenerational epigenetic inheritance (also called RNAe) over several generations and germline immortality. Together with pid-5, plays a role in the formation of liquid-like condensates in the cytoplasm called Z granules. This Caenorhabditis elegans protein is Protein pid-4.